Consider the following 636-residue polypeptide: Sodium-dependent proline transporter (636 aa).

Residues 1–45 (MKKLQGAHLRKPVTPDLLMTPSDQGDVDLDVDFAAHRGNWTGKLD) lie on the Cytoplasmic side of the membrane. Thr-20 bears the Phosphothreonine mark. A Phosphoserine modification is found at Ser-22. The next 3 membrane-spanning stretches (helical) occupy residues 46–66 (FLLS…FPYR), 74–93 (AFLV…LFFL), and 117–137 (GAGA…NMII). Topologically, residues 138–214 (AYVLFYLFAS…QGIGSPGEIR (77 aa)) are extracellular. Asn-182 is a glycosylation site (N-linked (GlcNAc...) asparagine). Transmembrane regions (helical) follow at residues 215–233 (WNLC…LCIL), 242–259 (VVYF…MLLV), 295–312 (IFYS…FASY), 324–345 (FIVT…FSVL), 378–397 (LPLS…TLGL), 425–443 (VFSG…ILTT), 459–479 (SFGL…VYGI), 500–519 (ACWL…YSIV), and 538–556 (LGIL…GMLV). The Cytoplasmic portion of the chain corresponds to 557–636 (AVLREEGSLW…EIAEEEESMM (80 aa)). Phosphoserine is present on residues Ser-573 and Ser-582. Thr-588 is modified (phosphothreonine). The residue at position 591 (Tyr-591) is a Phosphotyrosine. Ser-598 and Ser-600 each carry phosphoserine.

This sequence belongs to the sodium:neurotransmitter symporter (SNF) (TC 2.A.22) family. SLC6A7 subfamily. Brain specific (at protein level). Highly expressed in hippocampus, corpus striatum and temporal cortex. Also expressed in frontal cortex, occipital cortex and, at lower levels, in cerebellum and parietal cortex (at protein level).

The protein resides in the synaptic cell membrane. The enzyme catalyses L-proline(out) + chloride(out) + 2 Na(+)(out) = L-proline(in) + chloride(in) + 2 Na(+)(in). It carries out the reaction L-pipecolate(out) + chloride(out) + 2 Na(+)(out) = L-pipecolate(in) + chloride(in) + 2 Na(+)(in). In terms of biological role, brain specific sodium (and chloride)-dependent proline transporter. Terminates the action of proline by its high affinity sodium-dependent reuptake into presynaptic terminals. This is Sodium-dependent proline transporter from Homo sapiens (Human).